The chain runs to 410 residues: Toluene 1,2-dioxygenase system ferredoxin--NAD(+) reductase component (410 aa).

4 to 35 serves as a coordination point for FAD; sequence HVAIIGNGVGGFTTAQALRAEGFEGRISLIGD. 145 to 173 contacts NAD(+); the sequence is RLLIVGGGLIGCEVATTARKLGLSVTILE.

It belongs to the bacterial ring-hydroxylating dioxygenase ferredoxin reductase family. This dioxygenase system consists of four proteins: the two subunits of the hydroxylase component (todC1 and todC2), a ferredoxin (TodB) and a ferredoxin reductase (TodA). FAD is required as a cofactor.

The enzyme catalyses 2 reduced [2Fe-2S]-[ferredoxin] + NAD(+) + H(+) = 2 oxidized [2Fe-2S]-[ferredoxin] + NADH. The protein operates within xenobiotic degradation; toluene degradation. Functionally, part of the electron transfer component of toluene 1,2-dioxygenase, transfers electrons from ferredoxin (TodB) to NADH. The protein is Toluene 1,2-dioxygenase system ferredoxin--NAD(+) reductase component (todA) of Pseudomonas putida (strain ATCC 700007 / DSM 6899 / JCM 31910 / BCRC 17059 / LMG 24140 / F1).